Consider the following 187-residue polypeptide: UPF0301 protein YqgE (187 aa).

This sequence belongs to the UPF0301 (AlgH) family.

This chain is UPF0301 protein YqgE, found in Escherichia coli O127:H6 (strain E2348/69 / EPEC).